A 327-amino-acid chain; its full sequence is Fumigatonoid B endoperoxide isomerase nvfE (327 aa).

The tract at residues 1 to 22 is disordered; that stretch reads MGRDQVSHKRSQNSNVSEIPDL. Residues His152, Asp154, and His234 each contribute to the Fe cation site.

This sequence belongs to the PhyH family. In terms of assembly, homodimer. Requires Fe cation as cofactor.

The enzyme catalyses fumigatonoid B = fumigatonoid C. It participates in secondary metabolite biosynthesis; terpenoid biosynthesis. Fumigatonoid B endoperoxide isomerase; part of the gene cluster that mediates the biosynthesis of novofumigatonin, a heavily oxygenated meroterpenoid containing a unique orthoester moiety. The first step of the pathway is the synthesis of 3,5-dimethylorsellinic acid (DMOA) by the polyketide synthase nvfA via condensation of one acetyl-CoA starter unit with 3 malonyl-CoA units and 2 methylations. DMOA is then converted to farnesyl-DMOA by the farnesyltransferase nvfB. Epoxydation by FAD-dependent monooxygenase nvfK, followed by a protonation-initiated cyclization catalyzed by the terpene cyclase nvfL leads to the production of asnavolin H. The short chain dehydrogenase nvfC then as a 3-OH dehydrogenase of asnovolin H to yield chemesin D. There are two branches to synthesize asnovolin A from chemesin D. In one branch, chemesin D undergoes Baeyer-Villiger oxidation by nvfH, methylation by nvfJ, and enoyl reduction by the nvfM D enoylreductase that reduces the double bond between C-5'and C-6', to form respectively asnovolin I, asnovolin K, and asnovolin A. In the other branch, the methylation precedes the Baeyer-Villiger oxidation and the enoyl reduction to yield asnovolin A via the asnovolin J intermediate. Asnovolin A is further converted to fumigatonoid A by the Fe(II)/2-oxoglutarate-dependent dioxygenase nvfI that catalyzes an endoperoxidation reaction. The alpha/beta hydrolase nvfD then acts as an epimerase that converts fumigatonoid A to its C-5' epimer, which then undergoes spontaneous or nvfD-catalyzed lactonization. The following step utilizes the ketoreductase nvfG to produce fumigatonoid B. The dioxygenase nvfE further converts fumigatonoid B into fumigatonoid C. Finally the Fe(II)/2-oxoglutarate-dependent dioxygenase nvfF catalyzes two rounds of oxidation to transform fumigatonoid C into the end product, novofumigatonin A. In Aspergillus novofumigatus (strain IBT 16806), this protein is Fumigatonoid B endoperoxide isomerase nvfE.